The following is a 291-amino-acid chain: Pantothenate synthetase (291 aa).

30-37 (MGYLHVGH) contributes to the ATP binding site. H37 (proton donor) is an active-site residue. Residue Q61 participates in (R)-pantoate binding. Q61 provides a ligand contact to beta-alanine. Position 147–150 (147–150 (GEKD)) interacts with ATP. Q153 is a (R)-pantoate binding site. Residues V176 and 184–187 (CSSR) each bind ATP.

The protein belongs to the pantothenate synthetase family. In terms of assembly, homodimer.

The protein localises to the cytoplasm. It catalyses the reaction (R)-pantoate + beta-alanine + ATP = (R)-pantothenate + AMP + diphosphate + H(+). The protein operates within cofactor biosynthesis; (R)-pantothenate biosynthesis; (R)-pantothenate from (R)-pantoate and beta-alanine: step 1/1. Functionally, catalyzes the condensation of pantoate with beta-alanine in an ATP-dependent reaction via a pantoyl-adenylate intermediate. This chain is Pantothenate synthetase, found in Sinorhizobium medicae (strain WSM419) (Ensifer medicae).